A 714-amino-acid polypeptide reads, in one-letter code: Polyribonucleotide nucleotidyltransferase (714 aa).

Mg(2+) contacts are provided by Asp-484 and Asp-490. One can recognise a KH domain in the interval 551–610 (PRIMVINIAPEKVREVIGPGGKVINKIIDETGVKIDTEDDGKITVAGENTESAQRAIDMI). Residues 620-688 (GEKYLGRVTK…DQGKMTLSRK (69 aa)) form the S1 motif domain. The disordered stretch occupies residues 685–714 (LSRKALLPKPERKEKKNFDKKSEDQNSEDK). Residues 693–714 (KPERKEKKNFDKKSEDQNSEDK) show a composition bias toward basic and acidic residues.

This sequence belongs to the polyribonucleotide nucleotidyltransferase family. Mg(2+) serves as cofactor.

It is found in the cytoplasm. The catalysed reaction is RNA(n+1) + phosphate = RNA(n) + a ribonucleoside 5'-diphosphate. Involved in mRNA degradation. Catalyzes the phosphorolysis of single-stranded polyribonucleotides processively in the 3'- to 5'-direction. The sequence is that of Polyribonucleotide nucleotidyltransferase from Finegoldia magna (strain ATCC 29328 / DSM 20472 / WAL 2508) (Peptostreptococcus magnus).